The sequence spans 401 residues: Serine/threonine transporter SstT (401 aa).

8 consecutive transmembrane segments (helical) span residues 17–37 (IGIGVVLGVLLGLIAPKITVI), 40–60 (FGSLFVGALKAIAPLLVLTLV), 78–98 (VICLYLFGTFAAAFIAVGASY), 138–158 (ALATANYIGVLTWAAVFGLAF), 179–199 (VVGWIIGLAPFGIMGLVFDTI), 212–232 (LLLLLLVGSMIFVALVVNPLI), 295–315 (MAGAAITINILTMAAVHTLGI), and 336–356 (ASGVAGGSLLLIPVACSLFGI).

The protein belongs to the dicarboxylate/amino acid:cation symporter (DAACS) (TC 2.A.23) family.

The protein resides in the cell membrane. The enzyme catalyses L-serine(in) + Na(+)(in) = L-serine(out) + Na(+)(out). The catalysed reaction is L-threonine(in) + Na(+)(in) = L-threonine(out) + Na(+)(out). In terms of biological role, involved in the import of serine and threonine into the cell, with the concomitant import of sodium (symport system). The sequence is that of Serine/threonine transporter SstT from Streptococcus suis (strain 98HAH33).